Consider the following 439-residue polypeptide: Type 3 secretion system ATPase (439 aa).

172 to 177 (GGGKST) lines the ATP pocket.

This sequence belongs to the ATPase alpha/beta chains family. T3SS ATPase subfamily. In terms of assembly, the core secretion machinery of the T3SS is composed of approximately 20 different proteins, including cytoplasmic components, a base, an export apparatus and a needle. This subunit is part of the cytosolic complex. Forms homohexamers.

It is found in the cytoplasm. It carries out the reaction ATP + H2O + cellular proteinSide 1 = ADP + phosphate + cellular proteinSide 2.. Functionally, ATPase component of the type III secretion system (T3SS), also called injectisome, which is used to inject bacterial effector proteins into eukaryotic host cells. Acts as a molecular motor to provide the energy that is required for the export of proteins. Required for type III secretion apparatus (T3SA) formation, proper protein secretion, host cell invasion and virulence. May play a critical role in T3SS substrate recognition, disassembly of the effector/chaperone complex and unfolding of the effector in an ATP-dependent manner prior to secretion. This Yersinia pseudotuberculosis serotype I (strain IP32953) protein is Type 3 secretion system ATPase.